A 363-amino-acid chain; its full sequence is Type-2 angiotensin II receptor (363 aa).

Topologically, residues 1–45 (MKDNFSFAATSRNITSSLPFDNLNATGTNESAFNCSHKPADKHLE) are extracellular. N4, N13, N24, N29, and N34 each carry an N-linked (GlcNAc...) asparagine glycan. 2 disulfides stabilise this stretch: C35/C290 and C117/C195. The chain crosses the membrane as a helical span at residues 46 to 70 (AIPVLYYMIFVIGFAVNIVVVSLFC). Residues 71 to 80 (CQKGPKKVSS) lie on the Cytoplasmic side of the membrane. Residues 81–104 (IYIFNLAVADLLLLATLPLWATYY) traverse the membrane as a helical segment. Y103 and Y104 together coordinate angiotensin II. The Extracellular portion of the chain corresponds to 105 to 114 (SYRYDWLFGP). Residues 115–140 (VMCKVFGSFLTLNMFASIFFITCMSV) traverse the membrane as a helical segment. Over 141–159 (DRYQSVIYPFLSQRRNPWQ) the chain is Cytoplasmic. The helical transmembrane segment at 160–181 (ASYVVPLVWCMACLSSLPTFYF) threads the bilayer. Residues R182, Y204, and K215 each contribute to the angiotensin II site. Topologically, residues 182–206 (RDVRTIEYLGVNACIMAFPPEKYAQ) are extracellular. The helical transmembrane segment at 207 to 232 (WSAGIALMKNILGFIIPLIFIATCYF) threads the bilayer. At 233–257 (GIRKHLLKTNSYGKNRITRDQVLKM) the chain is on the cytoplasmic side. Residues 258–281 (AAAVVLAFIICWLPFHVLTFLDAL) form a helical membrane-spanning segment. D279 is an angiotensin II binding site. Over 282-294 (TWMGIINSCEVIA) the chain is Extracellular. A helical membrane pass occupies residues 295–320 (VIDLALPFAILLGFTNSCVNPFLYCF). Residue D297 coordinates angiotensin II. Residues 321-363 (VGNRFQQKLRSVFRVPITWLQGKRETMSCRKSSSLREMDTFVS) lie on the Cytoplasmic side of the membrane. Positions 324–333 (RFQQKLRSVF) are helix VIII. Residue S354 is modified to Phosphoserine; by PKC.

This sequence belongs to the G-protein coupled receptor 1 family. Interacts with MTUS1. Abundant expression in fetal tissues, immature brain, skin wound and atretic ovarian follicles.

It localises to the cell membrane. In terms of biological role, receptor for angiotensin II, a vasoconstricting peptide. Signals primarily via a non-canonical G-protein- and beta-arrestin independent pathways. Cooperates with MTUS1 to inhibit ERK2 activation and cell proliferation. This chain is Type-2 angiotensin II receptor, found in Rattus norvegicus (Rat).